The primary structure comprises 394 residues: Probable ribosome production factor 1 (394 aa).

2 disordered regions span residues 1 to 98 and 116 to 152; these read MIKI…PVLN and MKKE…EKDQ. Composition is skewed to acidic residues over residues 15 to 33 and 59 to 88; these read QDSD…DLEV and ASED…DDDD. Basic residues predominate over residues 116–134; the sequence is MKKEKHKKKMQERRARRKA. Positions 185–369 constitute a Brix domain; that stretch reads PKVLITFADN…LRSLQEGTFD (185 aa). The RNA-binding stretch occupies residues 347–364; that stretch reads VKLRELGPRFTLKLRSLQ.

It is found in the nucleus. It localises to the nucleolus. May be required for ribosome biogenesis. The sequence is that of Probable ribosome production factor 1 from Drosophila melanogaster (Fruit fly).